A 230-amino-acid polypeptide reads, in one-letter code: UPF0173 metal-dependent hydrolase RHOS4_08540 (230 aa).

The protein belongs to the UPF0173 family.

This chain is UPF0173 metal-dependent hydrolase RHOS4_08540, found in Cereibacter sphaeroides (strain ATCC 17023 / DSM 158 / JCM 6121 / CCUG 31486 / LMG 2827 / NBRC 12203 / NCIMB 8253 / ATH 2.4.1.) (Rhodobacter sphaeroides).